A 953-amino-acid polypeptide reads, in one-letter code: Zinc finger protein 507 (953 aa).

At S95 the chain carries Phosphoserine. 3 C2H2-type zinc fingers span residues 125-147 (YQCSLCKFLSSSFSVLKDHIKQH), 155-185 (LMCSECHITSRSQEELEAHVVNDHDNDANIH), and 248-270 (YRCLFCSYTCGQQRMLKTHAWKH). S427 is modified (phosphoserine). Positions 470-489 (KGLATDENAPPGRRRTNSES) are disordered. C2H2-type zinc fingers lie at residues 641-663 (YRCRLCHYTSGNKGYIKQHLRVH), 669-691 (YQCPICEHIADNSKDLESHMIHH), 697-720 (YQCKQCEESFHYKSQLRNHEREQH), 758-780 (YRCDVCDYTSTTYVGVRNHRRIH), and 786-808 (YRCSLCGYVCSHPPSLKSHMWKH). Residues 831 to 891 (GRVLGKTPGK…KLSPTSNTSY (61 aa)) are disordered. The span at 854-891 (TGSSENAVSSSELMSQTPSEVLGTNENEKLSPTSNTSY) shows a compositional bias: polar residues. The segment at 911–933 (FCCCICGFESTSKENLLDHMKEH) adopts a C2H2-type 9 zinc-finger fold.

It belongs to the krueppel C2H2-type zinc-finger protein family.

The protein localises to the nucleus. Functionally, may be involved in transcriptional regulation. In Pongo abelii (Sumatran orangutan), this protein is Zinc finger protein 507 (ZNF507).